Here is a 262-residue protein sequence, read N- to C-terminus: MRTELLSKLYDDFGIDQLPHTQHGVTSDRLGKLYEKYILDIFKDIESLKKYNTNAFPQEKDISSKLLKALNLDLDNIIDVSSSDTDLGRTIAGGSPKTDATIRFTFHNQSSRLVPLNIKHSSKKKVSIAEYDVETICTGVGISDGELKELIRKHQNDQSAKLFTPVQKQRLTELLEPYRERFIRWCVTLRAEKSEGNILHPDLLIRFQVIDREYVDVTIKNIDDYVSDRIAEGSKARKPGFGTGLNWTYASGSKAKKMQFKG.

It carries out the reaction Endonucleolytic cleavage of DNA to give specific double-stranded fragments with terminal 5'-phosphates.. Functionally, a P subtype restriction enzyme that recognizes the double-stranded sequence 5'-CCGG-3' and cleaves after C-1. This chain is Type II restriction enzyme MspI (mspIR), found in Moraxella sp.